The sequence spans 564 residues: Type 2 DNA topoisomerase 6 subunit B (564 aa).

ATP-binding positions include asparagine 46, aspartate 78, 99 to 100, 109 to 116, and lysine 471; these read TK and GQQGIGIS.

The protein belongs to the TOP6B family. As to quaternary structure, homodimer. Heterotetramer of two Top6A and two Top6B chains.

It catalyses the reaction ATP-dependent breakage, passage and rejoining of double-stranded DNA.. In terms of biological role, relaxes both positive and negative superturns and exhibits a strong decatenase activity. The polypeptide is Type 2 DNA topoisomerase 6 subunit B (Pyrococcus abyssi (strain GE5 / Orsay)).